Consider the following 549-residue polypeptide: DNA polymerase lambda (549 aa).

The BRCT domain occupies 17–116; that stretch reads DPDGMFRGVS…ERLPEHKFAI (100 aa). Residues 126–197 form a disordered region; the sequence is KEGGAAGSGV…ASGDSKETIA (72 aa). The span at 149–175 shows a compositional bias: basic and acidic residues; the sequence is PENRKETAGGNRESRDAIAHPNEDSDV. Over residues 180-197 the composition is skewed to polar residues; that stretch reads STCTSSQSASGDSKETIA. The interval 233–247 is DNA-binding; the sequence is NIYRALGDDRRSFSY. Residue His-280 is part of the active site. The interval 315–318 is DNA-binding; sequence GPAT. Residues Arg-356, 387 to 390, and 396 to 399 each bind dCTP; these read SYRR and GDMD. Residues 390 to 399 are involved in primer binding; the sequence is RGKSSCGDMD. Mn(2+) contacts are provided by Asp-397, Asp-399, and Asp-464. The interval 438–479 is DNA-binding; the sequence is IEGTDCGVDTYFGLCTYPGRELRHRIDLKVYPRNRHAFGLLA. Asn-487 is a dCTP binding site.

Belongs to the DNA polymerase type-X family. In terms of assembly, interacts with PCNA. Requires Mn(2+) as cofactor. Expressed in proliferating tissues. Expressed in roots, root apex, young leaves, shoot apical meristem (SAM), flag leaves and panicles.

Its subcellular location is the nucleus. The catalysed reaction is DNA(n) + a 2'-deoxyribonucleoside 5'-triphosphate = DNA(n+1) + diphosphate. Functionally, repair polymerase involved in base excision repair (BER) and responsible for repair of lesions that give rise to abasic (AP) sites in DNA. Has both DNA polymerase and terminal transferase activities. Has a 5'-deoxyribose-5-phosphate lyase (dRP lyase) activity. The chain is DNA polymerase lambda from Oryza sativa subsp. japonica (Rice).